The chain runs to 226 residues: Transcriptional regulatory protein CitT (226 aa).

A Response regulatory domain is found at 3-119; the sequence is HIAIAEDDFR…KFRQVLLQYK (117 aa). At Asp54 the chain carries 4-aspartylphosphate. The segment at residues 178–197 is a DNA-binding region (H-T-H motif); the sequence is AEELGEKMGASRTTARRYAE.

Post-translationally, phosphorylated by CitS.

It is found in the cytoplasm. Member of the two-component regulatory system CitT/CitS. Regulates the expression of the citM-yflN operon. Phosphorylated CitT binds to the citM promoter to activate the transcription of the citM-yflN operon. The chain is Transcriptional regulatory protein CitT (citT) from Bacillus subtilis (strain 168).